A 125-amino-acid chain; its full sequence is Holo-[acyl-carrier-protein] synthase (125 aa).

The Mg(2+) site is built by aspartate 8 and glutamate 56.

Belongs to the P-Pant transferase superfamily. AcpS family. The cofactor is Mg(2+).

It is found in the cytoplasm. It carries out the reaction apo-[ACP] + CoA = holo-[ACP] + adenosine 3',5'-bisphosphate + H(+). Functionally, transfers the 4'-phosphopantetheine moiety from coenzyme A to a Ser of acyl-carrier-protein. The sequence is that of Holo-[acyl-carrier-protein] synthase from Borrelia turicatae (strain 91E135).